The sequence spans 73 residues: Beta-defensin 39 (73 aa).

Positions 1 to 23 (MKISCFLLLVLSLSCFQINSVSG) are cleaved as a signal peptide. Intrachain disulfides connect Cys29-Cys58, Cys36-Cys51, and Cys41-Cys59.

It belongs to the beta-defensin family.

It localises to the secreted. Has antibacterial activity. The sequence is that of Beta-defensin 39 (Defb39) from Rattus norvegicus (Rat).